The primary structure comprises 563 residues: Rhodopsin kinase GRK1 (563 aa).

The segment at 1–15 (MDFGSLETVVANSAF) is interaction with RCVRN. An N-terminal region spans residues 1–189 (MDFGSLETVV…LEAQPMGEDW (189 aa)). Residue serine 5 is modified to Phosphoserine. Threonine 8 bears the Phosphothreonine mark. Serine 21 carries the post-translational modification Phosphoserine; by PKA and autocatalysis. The RGS domain maps to 58–175 (FESVCLEQPI…LGSLYFLRFL (118 aa)). In terms of domain architecture, Protein kinase spans 190–455 (FLDFRVLGKG…CDKLRAHPLF (266 aa)). ATP contacts are provided by residues 196–204 (LGKGGFGEV) and lysine 219. Aspartate 317 acts as the Proton acceptor in catalysis. The AGC-kinase C-terminal domain occupies 456–521 (KDLNWRQLEA…GNCPIPWQEE (66 aa)). Residues 456-563 (KDLNWRQLEA…SSKSGMCLVS (108 aa)) form a C-terminal region. Position 491 is a phosphoserine; by autocatalysis (serine 491). A Phosphothreonine; by autocatalysis modification is found at threonine 492. Residues 539–563 (QMPDDMKGISGGSSSSSKSGMCLVS) are disordered. Low complexity predominate over residues 550 to 563 (GSSSSSKSGMCLVS). Position 560 is a cysteine methyl ester (cysteine 560). The S-farnesyl cysteine moiety is linked to residue cysteine 560. Residues 561–563 (LVS) constitute a propeptide, removed in mature form.

Belongs to the protein kinase superfamily. AGC Ser/Thr protein kinase family. GPRK subfamily. In terms of assembly, interacts (via N-terminus) with RCVRN (via C-terminus); the interaction is Ca(2+)-dependent. Interacts (when prenylated) with PDE6D; this promotes release from membranes. May form a complex composed of RHO, GRK1 and RCVRN in a Ca(2+)-dependent manner; RCVRN prevents the interaction between GRK1 and RHO. Post-translationally, autophosphorylated, Ser-21 is a minor site of autophosphorylation compared to Ser-491 and Thr-492. Phosphorylation at Ser-21 is regulated by light and activated by cAMP. In terms of processing, farnesylation is required for full activity. Retinal-specific. Expressed in rods and cones cells.

Its subcellular location is the membrane. The protein resides in the cell projection. It is found in the cilium. It localises to the photoreceptor outer segment. The catalysed reaction is L-threonyl-[rhodopsin] + ATP = O-phospho-L-threonyl-[rhodopsin] + ADP + H(+). It catalyses the reaction L-seryl-[rhodopsin] + ATP = O-phospho-L-seryl-[rhodopsin] + ADP + H(+). Its activity is regulated as follows. Inhibited by RCVRN, which prevents the interaction between GRK1 and RHO. Inhibition is calcium-dependent. Inhibited by phosphorylation of Ser-21. Functionally, retina-specific kinase involved in the signal turnoff via phosphorylation of rhodopsin (RHO), the G protein- coupled receptor that initiates the phototransduction cascade. This rapid desensitization is essential for scotopic vision and permits rapid adaptation to changes in illumination. May play a role in the maintenance of the outer nuclear layer in the retina. The sequence is that of Rhodopsin kinase GRK1 from Homo sapiens (Human).